The primary structure comprises 447 residues: KICSTOR complex protein ITFG2 (447 aa).

Residues 19 to 48 form an FG-GAP 1; atypical repeat; it reads FPHAICLGDVDNDTLNELVVGDTSGKVSVY. At serine 104 the chain carries Phosphoserine. One copy of the FG-GAP 2; atypical repeat lies at 126-155; the sequence is NTKVMLISDIDGDGCRELVVGYTDRVVRAF. Position 220 is a phosphoserine (serine 220).

In terms of assembly, part of the KICSTOR complex composed of KPTN, ITFG2, KICS2 and SZT2. SZT2 probably serves as a link between the other three proteins in the KICSTOR complex and may mediate the direct interaction with the GATOR complex via GATOR1. The KICSTOR complex interacts directly with the GATOR1 complex and most probably indirectly with the GATOR2 complex in an amino acid-independent manner.

The protein resides in the lysosome membrane. In terms of biological role, as part of the KICSTOR complex functions in the amino acid-sensing branch of the TORC1 signaling pathway. Recruits, in an amino acid-independent manner, the GATOR1 complex to the lysosomal membranes and allows its interaction with GATOR2 and the RAG GTPases. Functions upstream of the RAG GTPases and is required to negatively regulate mTORC1 signaling in absence of amino acids. In absence of the KICSTOR complex mTORC1 is constitutively localized to the lysosome and activated. The KICSTOR complex is also probably involved in the regulation of mTORC1 by glucose. In Homo sapiens (Human), this protein is KICSTOR complex protein ITFG2.